Reading from the N-terminus, the 245-residue chain is Purine nucleoside phosphorylase (245 aa).

H8 provides a ligand contact to a purine D-ribonucleoside. Phosphate contacts are provided by residues 24-28, R46, and 89-92; these read GDPGR and RAGS. Residue 184–185 coordinates a purine D-ribonucleoside; it reads ME. The active-site Proton donor is D207.

This sequence belongs to the PNP/MTAP phosphorylase family. In terms of assembly, homohexamer; trimer of homodimers.

The enzyme catalyses inosine + phosphate = alpha-D-ribose 1-phosphate + hypoxanthine. The catalysed reaction is guanosine + phosphate = alpha-D-ribose 1-phosphate + guanine. It carries out the reaction 2'-deoxyguanosine + phosphate = 2-deoxy-alpha-D-ribose 1-phosphate + guanine. It catalyses the reaction 2'-deoxyinosine + phosphate = 2-deoxy-alpha-D-ribose 1-phosphate + hypoxanthine. It participates in purine metabolism; purine nucleoside salvage. In terms of biological role, as part of the purine salvage pathway, catalyzes the phosphorolytic breakdown of the N-glycosidic bond in the beta-(deoxy)ribonucleoside molecules, with the formation of the corresponding free purine bases and pentose-1-phosphate. Preferentially acts on inosine and guanosine, and to a lesser extent on 2'-deoxyinosine and 2'-deoxyguanosine. In Plasmodium vivax (strain Salvador I), this protein is Purine nucleoside phosphorylase.